The chain runs to 689 residues: DNA ligase (689 aa).

NAD(+)-binding positions include 40 to 44, 89 to 90, and Glu121; these read DSEYD and SL. Lys123 acts as the N6-AMP-lysine intermediate in catalysis. NAD(+) is bound by residues Arg144, Glu179, Lys295, and Lys319. Zn(2+) contacts are provided by Cys413, Cys416, Cys431, and Cys437. The BRCT domain occupies 610 to 689; sequence REQSGLTDKI…EEWLTLIKNV (80 aa).

It belongs to the NAD-dependent DNA ligase family. LigA subfamily. The cofactor is Mg(2+). It depends on Mn(2+) as a cofactor.

The catalysed reaction is NAD(+) + (deoxyribonucleotide)n-3'-hydroxyl + 5'-phospho-(deoxyribonucleotide)m = (deoxyribonucleotide)n+m + AMP + beta-nicotinamide D-nucleotide.. Functionally, DNA ligase that catalyzes the formation of phosphodiester linkages between 5'-phosphoryl and 3'-hydroxyl groups in double-stranded DNA using NAD as a coenzyme and as the energy source for the reaction. It is essential for DNA replication and repair of damaged DNA. This is DNA ligase from Rickettsia conorii (strain ATCC VR-613 / Malish 7).